The primary structure comprises 75 residues: Sec-independent protein translocase protein TatA (75 aa).

The helical transmembrane segment at 1 to 21 (MGSFSIWHWLIVLVIVALVFG) threads the bilayer. The tract at residues 44–75 (KDANSDKPAEQVTQQKVADDTIDVQAKEKTNS) is disordered.

This sequence belongs to the TatA/E family. The Tat system comprises two distinct complexes: a TatABC complex, containing multiple copies of TatA, TatB and TatC subunits, and a separate TatA complex, containing only TatA subunits. Substrates initially bind to the TatABC complex, which probably triggers association of the separate TatA complex to form the active translocon.

It localises to the cell inner membrane. Functionally, part of the twin-arginine translocation (Tat) system that transports large folded proteins containing a characteristic twin-arginine motif in their signal peptide across membranes. TatA could form the protein-conducting channel of the Tat system. In Bordetella petrii (strain ATCC BAA-461 / DSM 12804 / CCUG 43448), this protein is Sec-independent protein translocase protein TatA.